A 551-amino-acid polypeptide reads, in one-letter code: Interleukin-2 receptor subunit beta (551 aa).

The N-terminal stretch at 1 to 26 (MAAPALSWRLPLLILLLPLATSWASA) is a signal peptide. Residues 27–240 (AVNGTSQFTC…TKPAALGKDT (214 aa)) lie on the Extracellular side of the membrane. Asn29, Asn43, and Asn71 each carry an N-linked (GlcNAc...) asparagine glycan. Cystine bridges form between Cys36–Cys46, Cys59–Cys110, and Cys74–Cys86. One can recognise a Fibronectin type-III domain in the interval 134–234 (APISLQVVHV…QPLAFRTKPA (101 aa)). N-linked (GlcNAc...) asparagine glycosylation occurs at Asn149. The WSXWS motif motif lies at 220 to 224 (WSPWS). Residues 241-265 (IPWLGHLLVGLSGAFGFIILVYLLI) traverse the membrane as a helical segment. The Cytoplasmic portion of the chain corresponds to 266–551 (NCRNTGPWLK…LQGQDPTHLV (286 aa)). The short motif at 278–286 (LKCNTPDPS) is the Box 1 motif element. 2 disordered regions span residues 389–416 (EEDPDEGVAGAPTGSSPQPLQPLSGEDD) and 432–486 (PSLL…VDFQ).

The protein belongs to the type I cytokine receptor family. Type 4 subfamily. In terms of assembly, non-covalent dimer of an alpha and a beta subunit. IL2R exists in 3 different forms: a high affinity dimer, an intermediate affinity monomer (beta subunit), and a low affinity monomer (alpha subunit). The high and intermediate affinity forms also associate with a gamma subunit. Interacts with SHB upon interleukin stimulation. As to quaternary structure, (Microbial infection) Interacts with HTLV-1 accessory protein p12I.

It is found in the cell membrane. Its function is as follows. Receptor for interleukin-2. This beta subunit is involved in receptor mediated endocytosis and transduces the mitogenic signals of IL2. Probably in association with IL15RA, involved in the stimulation of neutrophil phagocytosis by IL15. The polypeptide is Interleukin-2 receptor subunit beta (Homo sapiens (Human)).